Consider the following 697-residue polypeptide: Sialidase B (697 aa).

A signal peptide spans 1–29; that stretch reads MNKRGLYSKLGISVVGISLLMGVPTLIHA. Arg-245 is a binding site for substrate. Residue Asp-270 is the Proton acceptor of the active site. 3 BNR repeats span residues 280–291, 462–473, and 517–528; these read SYSDDNGKTWSE, TTSQNRGESWEQ, and LISDDSGQTWKK. Glu-541 is an active-site residue. Residue Arg-557 coordinates substrate. The BNR 4 repeat unit spans residues 566–577; sequence MTSRDSGETWSK. Residue Arg-619 participates in substrate binding. Tyr-653 functions as the Nucleophile in the catalytic mechanism.

The protein belongs to the glycosyl hydrolase 33 family.

The catalysed reaction is Hydrolysis of alpha-(2-&gt;3)-, alpha-(2-&gt;6)-, alpha-(2-&gt;8)- glycosidic linkages of terminal sialic acid residues in oligosaccharides, glycoproteins, glycolipids, colominic acid and synthetic substrates.. This Streptococcus pneumoniae serotype 4 (strain ATCC BAA-334 / TIGR4) protein is Sialidase B (nanB).